The sequence spans 131 residues: Cystatin-like cysteine protease inhibitor EPIC3 (131 aa).

The N-terminal stretch at 1-20 (MAFTRSIALFAGLALAASSA) is a signal peptide. N-linked (GlcNAc...) asparagine glycosylation occurs at N33. Positions 71-75 (QTVAG) match the Secondary area of contact motif.

It belongs to the cystatin family.

It is found in the secreted. In terms of biological role, secreted effector that interacts with and inhibits host apoplastic pathogenesis-related papain-like cysteine proteases. Inhibition of host proteases by a pathogen extracellular protease inhibitor forms a specific type of defense-counterdefense mechanism between plants and microbial pathogens. The polypeptide is Cystatin-like cysteine protease inhibitor EPIC3 (Phytophthora infestans (Potato late blight agent)).